A 292-amino-acid chain; its full sequence is Elongation factor Ts (292 aa).

An involved in Mg(2+) ion dislocation from EF-Tu region spans residues 79-82; the sequence is TDFV.

Belongs to the EF-Ts family.

The protein resides in the cytoplasm. Associates with the EF-Tu.GDP complex and induces the exchange of GDP to GTP. It remains bound to the aminoacyl-tRNA.EF-Tu.GTP complex up to the GTP hydrolysis stage on the ribosome. This Xanthomonas campestris pv. campestris (strain ATCC 33913 / DSM 3586 / NCPPB 528 / LMG 568 / P 25) protein is Elongation factor Ts.